The chain runs to 350 residues: UDP-glucose 4-epimerase GEPI48 (350 aa).

Residue 5–36 (TVLVTGGAGYIGSHTVLQLLLGGFKAVVVDNL) coordinates NAD(+). Ser-130 contacts substrate. Catalysis depends on Tyr-154, which acts as the Proton acceptor.

The protein belongs to the NAD(P)-dependent epimerase/dehydratase family. NAD(+) serves as cofactor.

The enzyme catalyses UDP-alpha-D-glucose = UDP-alpha-D-galactose. It participates in carbohydrate metabolism; galactose metabolism. The sequence is that of UDP-glucose 4-epimerase GEPI48 from Cyamopsis tetragonoloba (Guar).